Consider the following 462-residue polypeptide: MSALKIYNTLAREKQLFTPIDPGKVRMYVCGMTVYDYCHIGHARVMVVFDLVQRWLRASGFDVTYVRNITDIDDKIIKRAAENGETISQLTQRFIDAMDEDAAALGVQKPDHEPRATNYVPQMLGLIDMLERNGLAYKAADGDVNYSVRDFAGYGKLSGKSLDDLRAGERVDVNTGKHDPLDFVLWKSSKENEPEEVKWSSKWGSGRPGWHIECSAMACELLGEQFDIHGGGADLQFPHHENEIAQSEGASGHTFVNYWMHNGFVRVDNEKMSKSLGNFFTIREVLEKFDAEVVRFFILRAHYRSQLNYSDAHLDDARNALTRMYTALKDVAPDHLPLDMTEAHAVRFIDAMNDDFNTPLAIAVLFELANEINREKSPVLARQLIGLAGIVGLLQRPAQQFLHAGLAGADEMETLIIGQIAARADAKKAKNFAEADRIRAALLEKGIILEDKPGGLTEWRRA.

Cys-30 is a binding site for Zn(2+). A 'HIGH' region motif is present at residues 32–42 (MTVYDYCHIGH). The Zn(2+) site is built by Cys-214, His-239, and Glu-243. The short motif at 271 to 275 (KMSKS) is the 'KMSKS' region element. An ATP-binding site is contributed by Lys-274.

It belongs to the class-I aminoacyl-tRNA synthetase family. Monomer. Requires Zn(2+) as cofactor.

It localises to the cytoplasm. The enzyme catalyses tRNA(Cys) + L-cysteine + ATP = L-cysteinyl-tRNA(Cys) + AMP + diphosphate. The protein is Cysteine--tRNA ligase of Herminiimonas arsenicoxydans.